We begin with the raw amino-acid sequence, 564 residues long: Probable beta-glucosidase btgE (564 aa).

The signal sequence occupies residues 1–18 (MRGAFLATAAAIAGTAMA). Positions 285 to 304 (ATSSVAPSSSPSKPAAPSGA) are disordered. The N-linked (GlcNAc...) asparagine glycan is linked to asparagine 404. Glutamate 405 serves as the catalytic Proton donor. Glutamate 501 (nucleophile) is an active-site residue.

Belongs to the glycosyl hydrolase 17 family.

Its subcellular location is the secreted. The protein localises to the cell wall. It catalyses the reaction Hydrolysis of terminal, non-reducing beta-D-glucosyl residues with release of beta-D-glucose.. It participates in glycan metabolism; cellulose degradation. In terms of biological role, beta-glucosidases are one of a number of cellulolytic enzymes involved in the degradation of cellulosic biomass. Catalyzes the last step releasing glucose from the inhibitory cellobiose. The polypeptide is Probable beta-glucosidase btgE (btgE) (Aspergillus clavatus (strain ATCC 1007 / CBS 513.65 / DSM 816 / NCTC 3887 / NRRL 1 / QM 1276 / 107)).